A 354-amino-acid chain; its full sequence is Protein-arginine kinase (354 aa).

A Phosphagen kinase C-terminal domain is found at 24–254 (IVLSSRIRLA…QQIIQQEKMA (231 aa)). ATP-binding positions include 27–31 (SSRIR), histidine 92, arginine 125, 176–180 (RASVM), and 207–212 (RGIYGE). The RDXXRA motif of the pArg binding pocket involved in allosteric regulation signature appears at 337-342 (RDYRRA).

This sequence belongs to the ATP:guanido phosphotransferase family.

It catalyses the reaction L-arginyl-[protein] + ATP = N(omega)-phospho-L-arginyl-[protein] + ADP + H(+). Appears to be allosterically activated by the binding of pArg-containing polypeptides to the pArg-binding pocket localized in the C-terminal domain of McsB. Its function is as follows. Catalyzes the specific phosphorylation of arginine residues in a large number of proteins. Is part of the bacterial stress response system. Protein arginine phosphorylation has a physiologically important role and is involved in the regulation of many critical cellular processes, such as protein homeostasis, motility, competence, and stringent and stress responses, by regulating gene expression and protein activity. The chain is Protein-arginine kinase from Bacillus thuringiensis subsp. konkukian (strain 97-27).